Reading from the N-terminus, the 782-residue chain is Translation initiation factor IF-2 (782 aa).

The segment at 47 to 196 (DNAIDGTNKK…TPPKPKELPE (150 aa)) is disordered. Residues 53–65 (TNKKAEAPKKETT) are compositionally biased toward basic and acidic residues. Residues 66–81 (SNENGNSKGPNKPNMT) show a composition bias toward polar residues. Low complexity-rich tracts occupy residues 82-93 (NSNEKSNKPNNP) and 118-170 (NTSK…NNKG). The region spanning 283–452 (ERPPVVTIMG…LLVSEVEELK (170 aa)) is the tr-type G domain. Positions 292 to 299 (GHVDHGKT) are G1. Position 292-299 (292-299 (GHVDHGKT)) interacts with GTP. The tract at residues 317 to 321 (GITQH) is G2. The G3 stretch occupies residues 338–341 (DTPG). Residues 338 to 342 (DTPGH) and 392 to 395 (NKID) contribute to the GTP site. Residues 392-395 (NKID) are G4. The tract at residues 428–430 (SAK) is G5.

It belongs to the TRAFAC class translation factor GTPase superfamily. Classic translation factor GTPase family. IF-2 subfamily.

It localises to the cytoplasm. Functionally, one of the essential components for the initiation of protein synthesis. Protects formylmethionyl-tRNA from spontaneous hydrolysis and promotes its binding to the 30S ribosomal subunits. Also involved in the hydrolysis of GTP during the formation of the 70S ribosomal complex. The chain is Translation initiation factor IF-2 from Listeria monocytogenes serotype 4b (strain CLIP80459).